We begin with the raw amino-acid sequence, 72 residues long: Mitochondrial import receptor subunit TOM7-1 (72 aa).

The Cytoplasmic portion of the chain corresponds to 2–41 (LKPKGKNTKKAAAADEDDGAVAVVGKFVKEWGTWTAKKAK). Residues 42 to 59 (VITHYGFIPLVIIIGMNS) traverse the membrane as a helical segment. Residues 60 to 72 (EPKPSLSQLLSPV) are Mitochondrial intermembrane-facing.

It belongs to the Tom7 family. Forms part of the preprotein translocase complex of the outer mitochondrial membrane (TOM complex).

It is found in the mitochondrion outer membrane. Functionally, seems to act as a modulator of the dynamics of the mitochondrial protein transport machinery. Seems to promote the dissociation of subunits of the outer membrane translocase. The sequence is that of Mitochondrial import receptor subunit TOM7-1 (TOM7-1) from Solanum tuberosum (Potato).